Reading from the N-terminus, the 60-residue chain is Large ribosomal subunit protein bL32 (60 aa).

Residues 1–16 (MAVPRRKTSPSRRGMR) are compositionally biased toward basic residues. Residues 1 to 60 (MAVPRRKTSPSRRGMRRSADAIKRPTYVEDKDSGELRRPHHLDLKTGMYKGRQVLKKKDS) are disordered. Residues 17 to 44 (RSADAIKRPTYVEDKDSGELRRPHHLDL) show a composition bias toward basic and acidic residues.

In Rhodopseudomonas palustris (strain ATCC BAA-98 / CGA009), this protein is Large ribosomal subunit protein bL32.